Consider the following 124-residue polypeptide: MPTINQLVRKGRTPKVKKTKAPALNGSPMRRGVCTRVYTTTPKKPNSALRKVARVRLNGGVEVTAYIPGVGHNLQEHSIVLVRGGRVKDLPGVRYKIVRGALDTQGVKNRKQARSRYGAKMEKK.

The residue at position 89 (Asp89) is a 3-methylthioaspartic acid.

Belongs to the universal ribosomal protein uS12 family. In terms of assembly, part of the 30S ribosomal subunit. Contacts proteins S8 and S17. May interact with IF1 in the 30S initiation complex.

Its function is as follows. With S4 and S5 plays an important role in translational accuracy. Interacts with and stabilizes bases of the 16S rRNA that are involved in tRNA selection in the A site and with the mRNA backbone. Located at the interface of the 30S and 50S subunits, it traverses the body of the 30S subunit contacting proteins on the other side and probably holding the rRNA structure together. The combined cluster of proteins S8, S12 and S17 appears to hold together the shoulder and platform of the 30S subunit. In Arthrobacter sp. (strain FB24), this protein is Small ribosomal subunit protein uS12.